Consider the following 387-residue polypeptide: F420-dependent formate dehydrogenase 1 subunit beta (387 aa).

4Fe-4S ferredoxin-type domains lie at 275–298 (TIEEWNRQWNKCIKCYGCRDVCPV) and 326–355 (VRMSHMAFSCVNCGQCEDVCPMEIPVARIF). [4Fe-4S] cluster contacts are provided by Cys286, Cys289, Cys292, Cys296, Cys335, Cys338, Cys341, and Cys345. The segment at 366-387 (LGYRPGVDDEAPPALGGSCPTQ) is disordered.

The protein belongs to the FrhB family. In terms of assembly, dimer of an alpha (FdhA1) and a beta (FdhB1) subunit. [4Fe-4S] cluster is required as a cofactor. FAD serves as cofactor. Requires Zn(2+) as cofactor.

It catalyses the reaction oxidized coenzyme F420-(gamma-L-Glu)(n) + formate + 2 H(+) = reduced coenzyme F420-(gamma-L-Glu)(n) + CO2. Functionally, catalyzes the oxidation of formate to carbon dioxide, with coenzyme F420 as the electron acceptor. In vitro can also use methyl viologen as electron acceptor. The protein is F420-dependent formate dehydrogenase 1 subunit beta of Methanococcus maripaludis (strain DSM 14266 / JCM 13030 / NBRC 101832 / S2 / LL).